The primary structure comprises 303 residues: Glyceraldehyde-3-phosphate dehydrogenase (303 aa).

NAD(+) is bound by residues 6–7 (RI), Asp28, Arg72, and Thr114. Residues 143–145 (SCT), Thr174, 203–204 (TG), and Arg226 contribute to the D-glyceraldehyde 3-phosphate site. The active-site Nucleophile is the Cys144.

The protein belongs to the glyceraldehyde-3-phosphate dehydrogenase family. In terms of assembly, homotetramer.

The protein resides in the cytoplasm. The catalysed reaction is D-glyceraldehyde 3-phosphate + phosphate + NAD(+) = (2R)-3-phospho-glyceroyl phosphate + NADH + H(+). It functions in the pathway carbohydrate degradation; glycolysis; pyruvate from D-glyceraldehyde 3-phosphate: step 1/5. In terms of biological role, catalyzes the oxidative phosphorylation of glyceraldehyde 3-phosphate (G3P) to 1,3-bisphosphoglycerate (BPG) using the cofactor NAD. The first reaction step involves the formation of a hemiacetal intermediate between G3P and a cysteine residue, and this hemiacetal intermediate is then oxidized to a thioester, with concomitant reduction of NAD to NADH. The reduced NADH is then exchanged with the second NAD, and the thioester is attacked by a nucleophilic inorganic phosphate to produce BPG. This Klebsiella pneumoniae protein is Glyceraldehyde-3-phosphate dehydrogenase (gap).